Here is a 625-residue protein sequence, read N- to C-terminus: tRNA uridine 5-carboxymethylaminomethyl modification enzyme MnmG (625 aa).

13–18 (GGGHAG) contacts FAD. 273–287 (GPRYCPSIEDKVVRF) contributes to the NAD(+) binding site.

It belongs to the MnmG family. Homodimer. Heterotetramer of two MnmE and two MnmG subunits. FAD serves as cofactor.

The protein localises to the cytoplasm. In terms of biological role, NAD-binding protein involved in the addition of a carboxymethylaminomethyl (cmnm) group at the wobble position (U34) of certain tRNAs, forming tRNA-cmnm(5)s(2)U34. The chain is tRNA uridine 5-carboxymethylaminomethyl modification enzyme MnmG from Methylococcus capsulatus (strain ATCC 33009 / NCIMB 11132 / Bath).